The primary structure comprises 145 residues: Alpha-amylase/trypsin inhibitor CM2 (145 aa).

A signal peptide spans 1–25; the sequence is MASKSSITHLLLAAVLVSVFAAAAA.

The protein belongs to the protease inhibitor I6 (cereal trypsin/alpha-amylase inhibitor) family. As to expression, developing endosperm.

It localises to the secreted. Functionally, alpha-amylase/trypsin inhibitor. It could be involved in insect defense mechanisms. This Triticum aestivum (Wheat) protein is Alpha-amylase/trypsin inhibitor CM2.